We begin with the raw amino-acid sequence, 169 residues long: Peptide deformylase (169 aa).

Fe cation-binding residues include cysteine 93 and histidine 135. Glutamate 136 is an active-site residue. Histidine 139 lines the Fe cation pocket.

It belongs to the polypeptide deformylase family. Requires Fe(2+) as cofactor.

The catalysed reaction is N-terminal N-formyl-L-methionyl-[peptide] + H2O = N-terminal L-methionyl-[peptide] + formate. Removes the formyl group from the N-terminal Met of newly synthesized proteins. Requires at least a dipeptide for an efficient rate of reaction. N-terminal L-methionine is a prerequisite for activity but the enzyme has broad specificity at other positions. The sequence is that of Peptide deformylase from Aquifex aeolicus (strain VF5).